The primary structure comprises 391 residues: 4-hydroxy-3-methylbut-2-en-1-yl diphosphate synthase (flavodoxin) (391 aa).

Residues C282, C285, C317, and E324 each coordinate [4Fe-4S] cluster.

Belongs to the IspG family. The cofactor is [4Fe-4S] cluster.

It carries out the reaction (2E)-4-hydroxy-3-methylbut-2-enyl diphosphate + oxidized [flavodoxin] + H2O + 2 H(+) = 2-C-methyl-D-erythritol 2,4-cyclic diphosphate + reduced [flavodoxin]. The protein operates within isoprenoid biosynthesis; isopentenyl diphosphate biosynthesis via DXP pathway; isopentenyl diphosphate from 1-deoxy-D-xylulose 5-phosphate: step 5/6. In terms of biological role, converts 2C-methyl-D-erythritol 2,4-cyclodiphosphate (ME-2,4cPP) into 1-hydroxy-2-methyl-2-(E)-butenyl 4-diphosphate. The sequence is that of 4-hydroxy-3-methylbut-2-en-1-yl diphosphate synthase (flavodoxin) from Acidothermus cellulolyticus (strain ATCC 43068 / DSM 8971 / 11B).